Reading from the N-terminus, the 342-residue chain is Oxygen-dependent coproporphyrinogen-III oxidase (342 aa).

Residue S98 participates in substrate binding. H102 and H112 together coordinate a divalent metal cation. The active-site Proton donor is the H112. 114–116 (NYR) contacts substrate. Residues H146 and H176 each coordinate a divalent metal cation. The interval 266-301 (YVEFNLVWDRGTIFGLQTNGRTESILMSLPPLARWE) is important for dimerization.

Belongs to the aerobic coproporphyrinogen-III oxidase family. As to quaternary structure, homodimer. It depends on a divalent metal cation as a cofactor.

Its subcellular location is the cytoplasm. The enzyme catalyses coproporphyrinogen III + O2 + 2 H(+) = protoporphyrinogen IX + 2 CO2 + 2 H2O. Its pathway is porphyrin-containing compound metabolism; protoporphyrin-IX biosynthesis; protoporphyrinogen-IX from coproporphyrinogen-III (O2 route): step 1/1. In terms of biological role, involved in the heme and chlorophyll biosynthesis. Catalyzes the aerobic oxidative decarboxylation of propionate groups of rings A and B of coproporphyrinogen-III to yield the vinyl groups in protoporphyrinogen-IX. The polypeptide is Oxygen-dependent coproporphyrinogen-III oxidase (Prochlorococcus marinus (strain MIT 9515)).